The following is a 610-amino-acid chain: Glutamine--fructose-6-phosphate aminotransferase [isomerizing] (610 aa).

C2 serves as the catalytic Nucleophile; for GATase activity. The Glutamine amidotransferase type-2 domain occupies 2 to 218 (CGIVGAVAQR…EGDVAEITRR (217 aa)). SIS domains are found at residues 286 to 426 (AADI…EQGR) and 459 to 600 (LATD…VDQP). K605 serves as the catalytic For Fru-6P isomerization activity.

Homodimer.

The protein resides in the cytoplasm. The enzyme catalyses D-fructose 6-phosphate + L-glutamine = D-glucosamine 6-phosphate + L-glutamate. Functionally, catalyzes the first step in hexosamine metabolism, converting fructose-6P into glucosamine-6P using glutamine as a nitrogen source. The polypeptide is Glutamine--fructose-6-phosphate aminotransferase [isomerizing] (Vibrio parahaemolyticus serotype O3:K6 (strain RIMD 2210633)).